We begin with the raw amino-acid sequence, 1368 residues long: Kinesin-like protein KIF24 (1368 aa).

One can recognise an SAM domain in the interval 1–64; that stretch reads MASWLYECLC…FQLIKIIKIM (64 aa). Residues 89–112 form a disordered region; sequence ELRSGPRRQLNFDSPADNKDRNAS. Ser-102 and Ser-112 each carry phosphoserine. The 324-residue stretch at 223–546 folds into the Kinesin motor domain; it reads KIRVCVRKRP…LRYADRVKEL (324 aa). An ATP-binding site is contributed by 313 to 320; sequence GQTGAGKT. Ser-478 is modified (phosphoserine). Residues 478 to 709 are interaction with MPHOSPH9; it reads SLLALKECIR…STKCKKVQTV (232 aa). Positions 557–576 are enriched in polar residues; sequence TSRNRTSGNSSPKRIQSSPG. Disordered regions lie at residues 557–584 and 602–639; these read TSRNRTSGNSSPKRIQSSPGALSEDKCS and GSTRGKVHPLTSHPPNIPFTSAPKVSGKRGGSRGSPSQ. Residue Ser-584 is modified to Phosphoserine. Phosphothreonine; by NEK2 is present on Thr-621. A Phosphoserine; by NEK2 modification is found at Ser-622. Phosphoserine is present on Ser-646. Disordered stretches follow at residues 651–670, 729–753, 792–849, 864–938, and 952–984; these read TVRSGHVAKKKPEESAPLCS, HRAEYSQDSQRGTPARPASEAWTNI, QYRP…NTLE, GPEK…LAEK, and RGGGSSFDLRKDASQSEVSGENEGNLPSPEEDG. Acidic residues predominate over residues 819–830; sequence QVEELDDSDFSE. Ser-826 and Ser-829 each carry phosphoserine. 2 stretches are compositionally biased toward polar residues: residues 839-849 and 871-881; these read QRATKQRNTLE and ERQQSLFSSPR. A compositionally biased stretch (basic and acidic residues) spans 882 to 906; sequence TGDKKDLTKSWVDSRDPINHRRAAL. At Ser-1012 the chain carries Phosphoserine. 2 disordered regions span residues 1054–1073 and 1086–1148; these read MSLLENPDNEGSPPSEQLVQ and GGPV…SREA. Polar residues predominate over residues 1106 to 1119; that stretch reads SSATRHLWLSSSPP. Residues 1138-1148 show a composition bias toward basic and acidic residues; it reads HPADKLPSREA.

This sequence belongs to the TRAFAC class myosin-kinesin ATPase superfamily. Kinesin family. As to quaternary structure, interacts with CCP110, CEP97, TALPID3. Interacts with MPHOSPH9.

Its subcellular location is the cytoplasm. The protein resides in the cytoskeleton. The protein localises to the microtubule organizing center. It localises to the centrosome. It is found in the centriole. Its function is as follows. Microtubule-dependent motor protein that acts as a negative regulator of ciliogenesis by mediating recruitment of CCP110 to mother centriole in cycling cells, leading to restrict nucleation of cilia at centrioles. Mediates depolymerization of microtubules of centriolar origin, possibly to suppress aberrant cilia formation. Following activation by NEK2 involved in disassembly of primary cilium during G2/M phase but does not disassemble fully formed ciliary axonemes. As cilium assembly and disassembly is proposed to coexist in a dynamic equilibrium may suppress nascent cilium assembly and, potentially, ciliar re-assembly in cells that have already disassembled their cilia ensuring the completion of cilium removal in the later stages of the cell cycle. Plays an important role in recruiting MPHOSPH9, a negative regulator of cilia formation to the distal end of mother centriole. The polypeptide is Kinesin-like protein KIF24 (KIF24) (Homo sapiens (Human)).